Consider the following 317-residue polypeptide: Orange carotenoid-binding protein (317 aa).

In terms of domain architecture, OCP N-terminal spans 18-169 (ADVVPATIAR…DMGFDTSKLG (152 aa)). 3'-hydroxyechinenone-binding residues include Leu-37, Tyr-203, and Trp-290.

This sequence belongs to the orange carotenoid-binding protein family. In terms of assembly, homodimer. The cofactor is 3'-hydroxyechinenone. Proteolytically cleaved into a red 16.7 kDa form named red carotenoid-binding protein (RCP) which lacks 15 residues from the N-terminus and approximately 150 residues from the C-terminus.

It is found in the cellular thylakoid membrane. Functionally, acts as a blue-light photoreceptor and photo-protectant. Essential for inhibiting damaged induced by excess blue-green light via a process known as non-photochemical quenching (NPQ). Binding carotenoids improves OCP's intrinsic photoprotectant activity by broadening its absorption spectrum and facilitating the dissipation of absorbed energy. In the dark or dim light the stable inactive form (OCP-O) is orange, upon illumination with blue-green light it converts to a metastable active red form (OCP-R), inducing energy dissipation, quenching cellular fluorescence via NPQ. In Limnospira maxima (Arthrospira maxima), this protein is Orange carotenoid-binding protein.